The chain runs to 153 residues: MSVTDLVLVVFIALLLIYAIYDEFIMNMMKGKTRLQVHLKRKNKLDCMIFVGLIGILIYNNVMAHGAPLTTYLLVGLALVAVYISYIRWPKLLFKNTGFFYANTFIEYSRIKSMNLSEDGILVIDLEQRRLLIQVKKLDDLEKIYNFFIENQS.

3 consecutive transmembrane segments (helical) span residues 6–26 (LVLVVFIALLLIYAIYDEFIM), 45–65 (LDCMIFVGLIGILIYNNVMAH), and 67–87 (APLTTYLLVGLALVAVYISYI).

The protein belongs to the UPF0266 family.

Its subcellular location is the cell inner membrane. This Yersinia pseudotuberculosis serotype I (strain IP32953) protein is UPF0266 membrane protein YPTB1631.